A 617-amino-acid polypeptide reads, in one-letter code: V-type proton ATPase catalytic subunit A (617 aa).

250–257 (GAFGCGKT) provides a ligand contact to ATP.

This sequence belongs to the ATPase alpha/beta chains family. V-ATPase is a heteromultimeric enzyme made up of two complexes: the ATP-hydrolytic V1 complex and the proton translocation V0 complex. The V1 complex consists of three catalytic AB heterodimers that form a heterohexamer, three peripheral stalks each consisting of EG heterodimers, one central rotor including subunits D and F, and the regulatory subunits C and H. The proton translocation complex V0 consists of the proton transport subunit a, a ring of proteolipid subunits c9c'', rotary subunit d, subunits e and f, and the accessory subunits VhaAC45 and ATP6AP2.

It carries out the reaction ATP + H2O + 4 H(+)(in) = ADP + phosphate + 5 H(+)(out). Its activity is regulated as follows. ATP hydrolysis occurs at the interface between the nucleotide-binding domains of subunits A and B. ATP hydrolysis triggers a conformational change in the subunits D and F, which induces a shift of subunit d. The c-ring is subsequently rotated and results in a continuous proton translocation across the membrane. Its function is as follows. Catalytic subunit of the V1 complex of vacuolar(H+)-ATPase (V-ATPase), a multisubunit enzyme composed of a peripheral complex (V1) that hydrolyzes ATP and a membrane integral complex (V0) that translocates protons. V-ATPase is responsible for acidifying and maintaining the pH of intracellular compartments and in some cell types, is targeted to the plasma membrane, where it is responsible for acidifying the extracellular environment. In Manduca sexta (Tobacco hawkmoth), this protein is V-type proton ATPase catalytic subunit A (VHAA).